We begin with the raw amino-acid sequence, 54 residues long: Conotoxin Cal6.17 (54 aa).

The signal sequence occupies residues 1–19 (MSGTGVLLLTLLLLVTMAT). 3 cysteine pairs are disulfide-bonded: cysteine 24-cysteine 39, cysteine 32-cysteine 49, and cysteine 38-cysteine 53.

Expressed by the venom duct.

The protein resides in the secreted. Functionally, probable neurotoxin. The chain is Conotoxin Cal6.17 from Californiconus californicus (California cone).